The chain runs to 179 residues: Apoptosis regulator Bcl-2 homolog (179 aa).

The short motif at 76-95 (ELFKDLINWGRICGFIVFSA) is the BH1 element. The short motif at 126–141 (PWMISHGGQEEFLAFS) is the BH2 element.

This sequence belongs to the Bcl-2 family. As to quaternary structure, interacts with host BECN1 (via BH3 homology domain); this interaction allows the virus to inhibit BECN1, and thus autophagy. Interacts with host BID. Interacts with host BAX.

It is found in the host mitochondrion. The protein resides in the host endoplasmic reticulum. In terms of biological role, suppresses apoptosis in host cell to promote the viral replication. Has the ability to potentially bind to all the members of the proapoptotic Bcl-2 family. Inhibits autophagy by interacting with host Beclin 1 (BECN1). This is Apoptosis regulator Bcl-2 homolog from African swine fever virus (isolate Tick/South Africa/Pretoriuskop Pr4/1996) (ASFV).